We begin with the raw amino-acid sequence, 218 residues long: Probable transaldolase (218 aa).

Lysine 83 acts as the Schiff-base intermediate with substrate in catalysis.

It belongs to the transaldolase family. Type 3B subfamily.

The protein localises to the cytoplasm. It carries out the reaction D-sedoheptulose 7-phosphate + D-glyceraldehyde 3-phosphate = D-erythrose 4-phosphate + beta-D-fructose 6-phosphate. Its pathway is carbohydrate degradation; pentose phosphate pathway; D-glyceraldehyde 3-phosphate and beta-D-fructose 6-phosphate from D-ribose 5-phosphate and D-xylulose 5-phosphate (non-oxidative stage): step 2/3. Its function is as follows. Transaldolase is important for the balance of metabolites in the pentose-phosphate pathway. In Parvibaculum lavamentivorans (strain DS-1 / DSM 13023 / NCIMB 13966), this protein is Probable transaldolase.